Reading from the N-terminus, the 146-residue chain is Thyroid hormone-inducible hepatic protein (146 aa).

Residues 83–104 (KVAGSEENGTAETEEVEDESAS) form a disordered region. The segment covering 94 to 104 (ETEEVEDESAS) has biased composition (acidic residues).

It belongs to the SPOT14 family. As to quaternary structure, homodimer. Heterodimer with MID1IP1. Interacts with THRB and PLAGL1. As to expression, mainly expressed in tissues that synthesize triglycerides.

It localises to the nucleus. It is found in the cytoplasm. Plays a role in the regulation of lipogenesis, especially in lactating mammary gland. Important for the biosynthesis of triglycerides with medium-length fatty acid chains. May modulate lipogenesis by interacting with MID1IP1 and preventing its interaction with ACACA. May function as transcriptional coactivator. May modulate the transcription factor activity of THRB. In Homo sapiens (Human), this protein is Thyroid hormone-inducible hepatic protein (THRSP).